Consider the following 200-residue polypeptide: Glycerol-3-phosphate acyltransferase (200 aa).

Helical transmembrane passes span 2-22, 51-71, 84-104, 114-134, and 158-178; these read FNIP…AVIV, KAAA…VLLA, AIAA…FFGF, LGVL…IWLV, and LFFM…ILVL.

It belongs to the PlsY family. In terms of assembly, probably interacts with PlsX.

The protein resides in the cell inner membrane. It catalyses the reaction an acyl phosphate + sn-glycerol 3-phosphate = a 1-acyl-sn-glycero-3-phosphate + phosphate. It functions in the pathway lipid metabolism; phospholipid metabolism. Functionally, catalyzes the transfer of an acyl group from acyl-phosphate (acyl-PO(4)) to glycerol-3-phosphate (G3P) to form lysophosphatidic acid (LPA). This enzyme utilizes acyl-phosphate as fatty acyl donor, but not acyl-CoA or acyl-ACP. The chain is Glycerol-3-phosphate acyltransferase from Neisseria meningitidis serogroup A / serotype 4A (strain DSM 15465 / Z2491).